Here is a 138-residue protein sequence, read N- to C-terminus: Putative pre-16S rRNA nuclease (138 aa).

The protein belongs to the YqgF nuclease family.

The protein localises to the cytoplasm. Could be a nuclease involved in processing of the 5'-end of pre-16S rRNA. This is Putative pre-16S rRNA nuclease (yrrK) from Bacillus subtilis (strain 168).